The chain runs to 873 residues: MESMLTLAMEQPVKRNTLKKYKIACIVLLALLVIVSLGLGLGLGLRKPEKQGSCRKKCFDASFRGLENCRCDVACKDRGDCCWDFEDTCVESTRIWMCNQFRCGETRLEASLCSCSDDCLQRKDCCADYKSVCQGETSWLEENCDTAQQSQCPEGFDLPPVILFSMDGFRAEYLHTWDTLMPNINKLKTCGIHSKYMRAMYPTKTFPNHYTIVMGLYPESHGIIDNNMYDVNLNKNFSLSSKEQNNPAWWHGQPMWLTAMYQGLKAATYFWPGSEAAINGSFPSIYMPYNGSVPFEERISTLLKWLDLPKAERPRFYTMYFEEPDFSGHAGGPVSARVIKALQIVDHAFGMLMEGLKQRNLHNCVNIILLADHGMEQTYCNKMEYMTDYFPRINFYMYEGPAPRIRAHSIPHDFFSFNSEEIVRNLSCRKPDQHFKPYLTPDLPKRLHYAKNVRIDKVHLFVDRQWLAVRSKSNTNCGGGNHGYNNEFRSMEAIFLAHGPSFKEKTEVEPFENIEVYNLMCDLLRIQPAPNNGTHGSLNHLLKVPFYEPSHAEEVSKFSVCGFANPLPAESDCLCPHLQNSIQLEQVNQMLNLTQEEITATVKVNLPFGRPRVLQKNVDHCLLYHREYVSGFGKAMRMPMWSSYTVPQLGDTSPLPPTVPDCLRADVRVPPSESQKCSFYLADKNITHGFLYPPASNRTSDSQYDALITSNLVPMYEEFTKMWDYFHSVLLIKHATERNGVNVVSGPIFDYNYDGHFDAPDEITKHLANTDVPIPTHYFVVLTSCKNKSHTPENCPGWLDVLPFIIPHRPTNMESCPEGKPEALWVEERFTAHIARVRDVELLTGLDFYQEKVQPVSEILQLKTYLPTFETTI.

At 1-11 (MESMLTLAMEQ) the chain is on the cytoplasmic side. The helical; Signal-anchor for type II membrane protein transmembrane segment at 12–30 (PVKRNTLKKYKIACIVLLA) threads the bilayer. Residues 31–873 (LLVIVSLGLG…TYLPTFETTI (843 aa)) are Extracellular-facing. SMB domains follow at residues 51 to 93 (QGSC…VEST) and 94 to 138 (RIWM…GETS). Intrachain disulfides connect Cys-54-Cys-71, Cys-58-Cys-89, Cys-69-Cys-82, Cys-75-Cys-81, Cys-98-Cys-115, Cys-103-Cys-133, Cys-113-Cys-126, Cys-119-Cys-125, Cys-144-Cys-190, and Cys-152-Cys-364. Positions 78 to 80 (RGD) match the Cell attachment site motif. A phosphodiesterase region spans residues 160-544 (PVILFSMDGF…HGSLNHLLKV (385 aa)). Asp-167 provides a ligand contact to Zn(2+). Lys-204 is an ATP binding site. Thr-205 is a Zn(2+) binding site. Thr-205 (nucleophile) is an active-site residue. An ATP-binding site is contributed by Asn-226. Asn-236 is a glycosylation site (N-linked (GlcNAc...) asparagine). Residue Glu-275 participates in ATP binding. Asn-279 is a glycosylation site (N-linked (GlcNAc...) asparagine). Tyr-289 serves as a coordination point for ATP. Asn-290 carries an N-linked (GlcNAc...) asparagine glycan. The Zn(2+) site is built by Asp-325, His-329, Asp-372, and His-373. Disulfide bonds link Cys-380–Cys-477, Cys-428–Cys-816, Cys-561–Cys-621, Cys-573–Cys-677, Cys-575–Cys-662, and Cys-785–Cys-795. Residue Asn-425 is glycosylated (N-linked (GlcNAc...) asparagine). A Zn(2+)-binding site is contributed by His-482. N-linked (GlcNAc...) asparagine glycans are attached at residues Asn-532, Asn-592, Asn-685, and Asn-697. The nuclease stretch occupies residues 580 to 873 (NSIQLEQVNQ…TYLPTFETTI (294 aa)). Residues Asp-750, Asn-752, Asp-754, His-756, and Asp-758 each contribute to the Ca(2+) site. Asn-787 is a glycosylation site (N-linked (GlcNAc...) asparagine).

As to quaternary structure, monomer and homodimer. Zn(2+) is required as a cofactor. In terms of processing, N-glycosylated. N-glycosylation is necessary for normal transport to the cell membrane, but is not the apical targeting signal.

It is found in the cell membrane. The protein localises to the apical cell membrane. Its subcellular location is the secreted. It catalyses the reaction a ribonucleoside 5'-triphosphate + H2O = a ribonucleoside 5'-phosphate + diphosphate + H(+). It carries out the reaction ATP + H2O = AMP + diphosphate + H(+). The enzyme catalyses CTP + H2O = CMP + diphosphate + H(+). The catalysed reaction is GTP + H2O = GMP + diphosphate + H(+). It catalyses the reaction UTP + H2O = UMP + diphosphate + H(+). It carries out the reaction UDP-N-acetyl-alpha-D-glucosamine + H2O = N-acetyl-alpha-D-glucosamine 1-phosphate + UMP + 2 H(+). The enzyme catalyses P(1),P(3)-bis(5'-adenosyl) triphosphate + H2O = AMP + ADP + 2 H(+). The catalysed reaction is P(1),P(4)-bis(5'-adenosyl) tetraphosphate + H2O = AMP + ATP + 2 H(+). It catalyses the reaction P(1),P(5)-bis(5'-adenosyl) pentaphosphate + H2O = adenosine 5'-tetraphosphate + AMP + 2 H(+). It carries out the reaction P(1),P(4)-bis(5'-guanosyl) tetraphosphate + H2O = GMP + GTP + 2 H(+). The enzyme catalyses Hydrolytically removes 5'-nucleotides successively from the 3'-hydroxy termini of 3'-hydroxy-terminated oligonucleotides.. In terms of biological role, hydrolase that metabolizes extracellular nucleotides, including ATP, GTP, UTP and CTP. Limits mast cells and basophils response during inflammation and during the chronic phases of allergic responses by eliminating extracellular ATP, a signaling molecule activating these cells in an autocrine manner. Metabolizes extracellular ATP in the lumen of the small intestine, and thereby prevents ATP-induced apoptosis of intestinal plasmacytoid dendritic cells. Has a broad specificity and can also hydrolyze UDP-GlcNAc into UMP and GlcNAc-1-phosphate and potentially several other intracellular nucleotide sugars, including UDP-GalNAc, CMP-NeuAc, GDP-Fuc, and UDP-GlcA. Thereby, could modulate glycan biosynthesis and protein glycosylation. Can hydrolyze extracellular dinucleoside polyphosphates, including the vasoactive adenosine polyphosphates as well. In addition, displays an alkaline phosphodiesterase activity in vitro. The polypeptide is Ectonucleotide pyrophosphatase/phosphodiesterase family member 3 (Pongo abelii (Sumatran orangutan)).